A 201-amino-acid chain; its full sequence is Inosine triphosphate pyrophosphatase (201 aa).

13–18 (TGNAKK) provides a ligand contact to ITP. Glu-43 is a Mg(2+) binding site. ITP contacts are provided by residues Lys-55, 71-72 (DT), Lys-88, 148-151 (FGWD), Lys-171, and 176-177 (HR).

The protein belongs to the HAM1 NTPase family. In terms of assembly, homodimer. Mg(2+) serves as cofactor. Mn(2+) is required as a cofactor.

It is found in the cytoplasm. It catalyses the reaction ITP + H2O = IMP + diphosphate + H(+). The enzyme catalyses dITP + H2O = dIMP + diphosphate + H(+). The catalysed reaction is XTP + H2O = XMP + diphosphate + H(+). It carries out the reaction N(6)-hydroxy-dATP + H2O = N(6)-hydroxy-dAMP + diphosphate + H(+). In terms of biological role, pyrophosphatase that hydrolyzes the non-canonical purine nucleotides inosine triphosphate (ITP), deoxyinosine triphosphate (dITP) as well as 2'-deoxy-N-6-hydroxylaminopurine triphosphate (dHAPTP) and xanthosine 5'-triphosphate (XTP) to their respective monophosphate derivatives. The enzyme does not distinguish between the deoxy- and ribose forms. Probably excludes non-canonical purines from RNA and DNA precursor pools, thus preventing their incorporation into RNA and DNA and avoiding chromosomal lesions. This chain is Inosine triphosphate pyrophosphatase, found in Gallus gallus (Chicken).